Here is a 589-residue protein sequence, read N- to C-terminus: 3-(3-hydroxy-phenyl)propionate/3-hydroxycinnamic acid hydroxylase (589 aa).

Residues 15–44 (DVLIIGAGPVGLTLANTLGMAGVRVIVAEK) and 283–293 (FRVDRILLAGD) each bind FAD.

It belongs to the PheA/TfdB FAD monooxygenase family. FAD serves as cofactor.

It catalyses the reaction 3-(3-hydroxyphenyl)propanoate + NADH + O2 + H(+) = 3-(2,3-dihydroxyphenyl)propanoate + NAD(+) + H2O. It carries out the reaction (2E)-3-(3-hydroxyphenyl)prop-2-enoate + NADH + O2 + H(+) = (2E)-3-(2,3-dihydroxyphenyl)prop-2-enoate + NAD(+) + H2O. The protein operates within aromatic compound metabolism; 3-phenylpropanoate degradation. Catalyzes the insertion of one atom of molecular oxygen into position 2 of the phenyl ring of 3-(3-hydroxyphenyl)propionate (3-HPP) and hydroxycinnamic acid (3HCI). This is 3-(3-hydroxy-phenyl)propionate/3-hydroxycinnamic acid hydroxylase from Comamonas testosteroni (Pseudomonas testosteroni).